We begin with the raw amino-acid sequence, 782 residues long: U-box domain-containing protein 7 (782 aa).

The U-box domain maps to 271 to 345; it reads VPPEELRCPI…ASWCEQNGTQ (75 aa). ARM repeat units lie at residues 456–499, 502–541, 542–581, 583–623, and 626–665; these read EEAR…NLAV, NRNKELMLTSGVIRLLEKMISSAESHGSATALYLNLSCLD, EAKSVIGSSQAVPFLVQLLQKEIETQCKLDALHALYNLST, SPNI…NLAS, and EGKDEAVSSQGMISSLATVLDMGDTTEQEQAVSCLLILCN. Over residues 707 to 729 the composition is skewed to basic and acidic residues; that stretch reads EERQQRDQPSSNRDEPPQKEPAR. Positions 707-765 are disordered; it reads EERQQRDQPSSNRDEPPQKEPARKSLSAPLSVHGSTPASASVQDYEPRVLSKSMSRRKS. Over residues 739–748 the composition is skewed to polar residues; that stretch reads HGSTPASASV.

It carries out the reaction S-ubiquitinyl-[E2 ubiquitin-conjugating enzyme]-L-cysteine + [acceptor protein]-L-lysine = [E2 ubiquitin-conjugating enzyme]-L-cysteine + N(6)-ubiquitinyl-[acceptor protein]-L-lysine.. The protein operates within protein modification; protein ubiquitination. Functionally, functions as an E3 ubiquitin ligase. The polypeptide is U-box domain-containing protein 7 (PUB7) (Arabidopsis thaliana (Mouse-ear cress)).